Consider the following 171-residue polypeptide: S-ribosylhomocysteine lyase (171 aa).

Residues His54, His58, and Cys128 each contribute to the Fe cation site.

The protein belongs to the LuxS family. Homodimer. Requires Fe cation as cofactor.

The catalysed reaction is S-(5-deoxy-D-ribos-5-yl)-L-homocysteine = (S)-4,5-dihydroxypentane-2,3-dione + L-homocysteine. Involved in the synthesis of autoinducer 2 (AI-2) which is secreted by bacteria and is used to communicate both the cell density and the metabolic potential of the environment. The regulation of gene expression in response to changes in cell density is called quorum sensing. Catalyzes the transformation of S-ribosylhomocysteine (RHC) to homocysteine (HC) and 4,5-dihydroxy-2,3-pentadione (DPD). The protein is S-ribosylhomocysteine lyase of Photorhabdus laumondii subsp. laumondii (strain DSM 15139 / CIP 105565 / TT01) (Photorhabdus luminescens subsp. laumondii).